The sequence spans 817 residues: Probable beta-glucosidase G (817 aa).

The N-terminal stretch at 1 to 20 is a signal peptide; that stretch reads MANIAHLIVSGLLAATVAHG. 4 N-linked (GlcNAc...) asparagine glycosylation sites follow: asparagine 40, asparagine 58, asparagine 229, and asparagine 276. Aspartate 304 is a catalytic residue. N-linked (GlcNAc...) asparagine glycans are attached at residues asparagine 343, asparagine 350, asparagine 402, asparagine 507, asparagine 563, asparagine 584, asparagine 623, asparagine 662, asparagine 679, and asparagine 715.

This sequence belongs to the glycosyl hydrolase 3 family.

It localises to the secreted. It carries out the reaction Hydrolysis of terminal, non-reducing beta-D-glucosyl residues with release of beta-D-glucose.. Its pathway is glycan metabolism; cellulose degradation. Its function is as follows. Beta-glucosidases are one of a number of cellulolytic enzymes involved in the degradation of cellulosic biomass. Catalyzes the last step releasing glucose from the inhibitory cellobiose. The chain is Probable beta-glucosidase G (bglG) from Aspergillus terreus (strain NIH 2624 / FGSC A1156).